We begin with the raw amino-acid sequence, 166 residues long: Phosphopantetheine adenylyltransferase (166 aa).

Residue Thr-9 participates in substrate binding. ATP-binding positions include 9–10 (TF) and His-17. Substrate contacts are provided by Lys-41, Leu-73, and Arg-87. Residues 88-90 (GLR), Glu-98, and 123-129 (YQFISGT) contribute to the ATP site.

The protein belongs to the bacterial CoaD family. As to quaternary structure, homohexamer. Mg(2+) is required as a cofactor.

Its subcellular location is the cytoplasm. The enzyme catalyses (R)-4'-phosphopantetheine + ATP + H(+) = 3'-dephospho-CoA + diphosphate. It functions in the pathway cofactor biosynthesis; coenzyme A biosynthesis; CoA from (R)-pantothenate: step 4/5. Its function is as follows. Reversibly transfers an adenylyl group from ATP to 4'-phosphopantetheine, yielding dephospho-CoA (dPCoA) and pyrophosphate. This Burkholderia mallei (strain NCTC 10229) protein is Phosphopantetheine adenylyltransferase.